A 147-amino-acid polypeptide reads, in one-letter code: Cytochrome c oxidase subunit 3 (147 aa).

The next 4 membrane-spanning stretches (helical) occupy residues 13–33 (FQIP…VTWA), 48–68 (GLFI…YEYF), 83–103 (FFMA…FLLI), and 125–145 (AWYW…IYWW).

The protein belongs to the cytochrome c oxidase subunit 3 family. In terms of assembly, component of the cytochrome c oxidase (complex IV, CIV), a multisubunit enzyme composed of a catalytic core of 3 subunits and several supernumerary subunits. The complex exists as a monomer or a dimer and forms supercomplexes (SCs) in the inner mitochondrial membrane with ubiquinol-cytochrome c oxidoreductase (cytochrome b-c1 complex, complex III, CIII).

The protein localises to the mitochondrion inner membrane. The catalysed reaction is 4 Fe(II)-[cytochrome c] + O2 + 8 H(+)(in) = 4 Fe(III)-[cytochrome c] + 2 H2O + 4 H(+)(out). In terms of biological role, component of the cytochrome c oxidase, the last enzyme in the mitochondrial electron transport chain which drives oxidative phosphorylation. The respiratory chain contains 3 multisubunit complexes succinate dehydrogenase (complex II, CII), ubiquinol-cytochrome c oxidoreductase (cytochrome b-c1 complex, complex III, CIII) and cytochrome c oxidase (complex IV, CIV), that cooperate to transfer electrons derived from NADH and succinate to molecular oxygen, creating an electrochemical gradient over the inner membrane that drives transmembrane transport and the ATP synthase. Cytochrome c oxidase is the component of the respiratory chain that catalyzes the reduction of oxygen to water. Electrons originating from reduced cytochrome c in the intermembrane space (IMS) are transferred via the dinuclear copper A center (CU(A)) of subunit 2 and heme A of subunit 1 to the active site in subunit 1, a binuclear center (BNC) formed by heme A3 and copper B (CU(B)). The BNC reduces molecular oxygen to 2 water molecules using 4 electrons from cytochrome c in the IMS and 4 protons from the mitochondrial matrix. This chain is Cytochrome c oxidase subunit 3 (COIII), found in Spodoptera frugiperda (Fall armyworm).